The chain runs to 229 residues: Flagellar L-ring protein (229 aa).

Residues 1–25 (MKQVRLLPSAAVRAACALAAAALAG) form the signal peptide. C26 carries N-palmitoyl cysteine lipidation. C26 carries S-diacylglycerol cysteine lipidation.

Belongs to the FlgH family. As to quaternary structure, the basal body constitutes a major portion of the flagellar organelle and consists of four rings (L,P,S, and M) mounted on a central rod.

The protein localises to the cell outer membrane. It is found in the bacterial flagellum basal body. Its function is as follows. Assembles around the rod to form the L-ring and probably protects the motor/basal body from shearing forces during rotation. This is Flagellar L-ring protein from Burkholderia multivorans (strain ATCC 17616 / 249).